A 507-amino-acid polypeptide reads, in one-letter code: Chromosomal replication initiator protein DnaA (507 aa).

Positions 1 to 72 are domain I, interacts with DnaA modulators; that stretch reads MNNYNKIWEI…KKITKLKFEE (72 aa). Residues 72 to 162 are domain II; it reads EKIIIEFVSE…KISFNKYNYG (91 aa). Residues 163 to 384 form a domain III, AAA+ region region; sequence NTNPKYSFDN…GALLRLLNYA (222 aa). Positions 207, 209, 210, and 211 each coordinate ATP. Positions 385–507 are domain IV, binds dsDNA; it reads QTFGYDIDIN…LELILKKINS (123 aa).

The protein belongs to the DnaA family. In terms of assembly, oligomerizes as a right-handed, spiral filament on DNA at oriC.

It localises to the cytoplasm. In terms of biological role, plays an essential role in the initiation and regulation of chromosomal replication. ATP-DnaA binds to the origin of replication (oriC) to initiate formation of the DNA replication initiation complex once per cell cycle. Binds the DnaA box (a 9 base pair repeat at the origin) and separates the double-stranded (ds)DNA. Forms a right-handed helical filament on oriC DNA; dsDNA binds to the exterior of the filament while single-stranded (ss)DNA is stabiized in the filament's interior. The ATP-DnaA-oriC complex binds and stabilizes one strand of the AT-rich DNA unwinding element (DUE), permitting loading of DNA polymerase. After initiation quickly degrades to an ADP-DnaA complex that is not apt for DNA replication. Binds acidic phospholipids. This is Chromosomal replication initiator protein DnaA from Onion yellows phytoplasma (strain OY-M).